The following is a 505-amino-acid chain: Hexose transporter 1 (505 aa).

Topologically, residues 1–27 are cytoplasmic; that stretch reads MNILRMDILSRGGTQEIEHRDGFFNTS. A helical membrane pass occupies residues 28-48; the sequence is FQYVLSACLASFIFGYQVSVL. Residues 49-78 lie on the Extracellular side of the membrane; the sequence is NTIKSYIVVEFEWCSTKTDTSCEDSILKSS. An intrachain disulfide couples C62 to C70. A helical transmembrane segment spans residues 79 to 99; it reads FLLASVFIGAVLGSGFSGYLV. Topologically, residues 100-104 are cytoplasmic; it reads KFGRR. A helical transmembrane segment spans residues 105–125; it reads FSLMVIYIFFIFVSILTAISH. The Extracellular segment spans residues 126–134; sequence HFHTILYAR. The helical transmembrane segment at 135–155 threads the bilayer; the sequence is LLSGFGIGLITVSVPMYISEM. The Cytoplasmic portion of the chain corresponds to 156 to 165; that stretch reads THKDKKGAYG. A helical membrane pass occupies residues 166–186; it reads VLHQLFITFGIFVAVLLGLFL. Q169 contacts alpha-D-glucose. Residue Q169 participates in beta-D-glucose binding. The Extracellular segment spans residues 187–208; it reads GDGPKINGKSIELSNFEMFWWR. A helical transmembrane segment spans residues 209-229; sequence FMFFLPTIISLLGIILLIAFY. Topologically, residues 230–294 are cytoplasmic; sequence KEETPYFLYE…SALKIPAYRN (65 aa). A helical membrane pass occupies residues 295–315; sequence VIILGCILSGFQQFTGINVLV. Residues Q306, Q307, and N312 each contribute to the alpha-D-glucose site. Q306 provides a ligand contact to beta-D-glucose. N312 is a beta-D-glucose binding site. Residues 316–332 are Extracellular-facing; it reads ANSNELYKEFLDKNLIT. Residues 333–353 traverse the membrane as a helical segment; that stretch reads ILSVIMTAVNFLMTFPAIYII. A beta-D-glucose-binding site is contributed by N342. The Cytoplasmic portion of the chain corresponds to 354–358; it reads EKIGR. A helical membrane pass occupies residues 359–379; that stretch reads KTLLLGGCIGVICAFLPTVIA. Topologically, residues 380–393 are extracellular; the sequence is RQVWGPTKIVNGLS. A helical membrane pass occupies residues 394–414; the sequence is IAGTFLMIISFAVSYGPVLWI. W413 contacts alpha-D-glucose. The Cytoplasmic portion of the chain corresponds to 415-430; the sequence is YLHEMYPSEIKDSAAS. The helical transmembrane segment at 431–451 threads the bilayer; the sequence is LASLINWVCAIIVVFPSDIII. Topologically, residues 452–456 are extracellular; the sequence is KKSPS. A helical membrane pass occupies residues 457–477; that stretch reads ILFMFFSVMCIIAFLFIMFFI. The Cytoplasmic portion of the chain corresponds to 478-505; it reads KETKGGEIGTSPYISLEERQKHIGKSKV.

This sequence belongs to the major facilitator superfamily. Sugar transporter (TC 2.A.1.1) family. Homodimer.

It localises to the cell membrane. It carries out the reaction D-glucose(out) = D-glucose(in). The catalysed reaction is D-fructose(out) = D-fructose(in). The enzyme catalyses D-galactose(in) = D-galactose(out). It catalyses the reaction D-mannose(out) = D-mannose(in). It carries out the reaction D-glucosamine(out) = D-glucosamine(in). The catalysed reaction is D-xylose(out) = D-xylose(in). Its activity is regulated as follows. Inhibited by cytochalasin B. In terms of biological role, sodium-independent facilitative hexose transporter. Can transport D-glucose and D-fructose. Can transport D-mannose, D-galactose, D-xylose and D-glucosamine. The chain is Hexose transporter 1 from Plasmodium yoelii yoelii.